The primary structure comprises 297 residues: Protein CANDIDATE G-PROTEIN COUPLED RECEPTOR 8 (297 aa).

Residue Asn20 is glycosylated (N-linked (GlcNAc...) asparagine). 7 helical membrane-spanning segments follow: residues 34-54, 70-90, 107-127, 142-162, 180-200, 215-235, and 242-262; these read GFLH…YLAY, IMIA…AWCC, LTLF…AFLF, FLIS…FLFG, WGLW…VFLM, FYNY…ASAF, and FGFW…LPLL.

It belongs to the UPF0359 family.

The protein localises to the membrane. In terms of biological role, G-protein coupled receptor. Plays a role in plants and microbes interactions. This chain is Protein CANDIDATE G-PROTEIN COUPLED RECEPTOR 8, found in Arabidopsis thaliana (Mouse-ear cress).